The following is a 539-amino-acid chain: MKLLAVRRLFRIQRVVIRYRLDDLLFALPLPWWMLALRFVLPWRWLPRRKSELSRGVRFRLALQDLGPIFIKFGQLLSTRRDLLPEDIADELMLLQDRVPPFDQQLAIKLIEEQLGARICDVFSRFDEKPLASASVAQVHAACLKTGEEVVVKVVRPGLKPIIGQDLAWLFILARMAERVSADARLLHPVQVVMDYEKTIYDELDLLREAANASQLRRNFEGSDLLYVPQVYWDWCRPKVLVMERIYGLQVTDMAGLADQRTDMKLLAERGVEIFFTQIFRDSFFHADMHPGNIFVSTVNPWAPKYIAIDCGIVGSLTPEDQDYLARNLFAFFKRDYRRVAQLHIDSGWVPAETKLNEFEAAIRTVCEPIFEKPLKDISFGQVLMRLFQTARRFNMEVQPQLVLLQKTLLNIEGLGRQLYPELDLWSTAQPYLERWMRERVSPKTLLGNLQSQVEQLPHIAGMTRDLLERMSRPHASDPPRPWHDRKDEPVLRLIGAALLVGGAIQGWVMSEAATQLLTLTAWPAAIMLIAGLYLIVRR.

A helical transmembrane segment spans residues 23-43 (DLLFALPLPWWMLALRFVLPW). The Protein kinase domain maps to 125–492 (RFDEKPLASA…WHDRKDEPVL (368 aa)). Residues 131 to 139 (LASASVAQV) and Lys153 contribute to the ATP site. Catalysis depends on Asp288, which acts as the Proton acceptor. 2 helical membrane passes run 494-514 (LIGA…SEAA) and 517-537 (LLTL…YLIV).

It belongs to the ABC1 family. UbiB subfamily.

It localises to the cell inner membrane. It participates in cofactor biosynthesis; ubiquinone biosynthesis [regulation]. In terms of biological role, is probably a protein kinase regulator of UbiI activity which is involved in aerobic coenzyme Q (ubiquinone) biosynthesis. This is Probable protein kinase UbiB from Pseudomonas syringae pv. syringae (strain B728a).